The following is a 346-amino-acid chain: MKLEGKKVTVHDMTLRDGMHPKRHQMTLEQMKSIACGLDAAGIPLIEVTHGDGLGGSSVNYGFPAHSDEEYLGAVIPLMKQAKVSALLLPGIGTVEHLKMAKDLGVNTIRVATHCTEADVSEQHITQSRKLGLDTVGFLMMAHMASPEKLVSQALLMQGYGANCIYVTDSAGYMLPDDVKARLSAVRAALKPETELGFHGHHNLAMGVANSIAAIEAGATRIDAAAAGLGAGAGNTPMEVFIAVCARMGIETGVDVFKIQDVAEDLVVPIMDHVIRIDRDSLTLGYAGVYSSFLLFAKRASAKYGVPARDILVELGRRGMVGGQEDMIEDTAMTMARERGLTLTAA.

Positions 8 to 260 (VTVHDMTLRD…ETGVDVFKIQ (253 aa)) constitute a Pyruvate carboxyltransferase domain. 16–17 (RD) contacts substrate. Residue aspartate 17 coordinates Mn(2+). Catalysis depends on histidine 20, which acts as the Proton acceptor. Serine 170 and histidine 199 together coordinate substrate. Histidine 199 and histidine 201 together coordinate Mn(2+). Tyrosine 290 is a substrate binding site.

This sequence belongs to the 4-hydroxy-2-oxovalerate aldolase family.

The catalysed reaction is (S)-4-hydroxy-2-oxopentanoate = acetaldehyde + pyruvate. This is 4-hydroxy-2-oxovalerate aldolase 2 (bphX3) from Metapseudomonas furukawaii (Pseudomonas furukawaii).